A 331-amino-acid polypeptide reads, in one-letter code: Type 2 lactosamine alpha-2,3-sialyltransferase (331 aa).

The Cytoplasmic segment spans residues 1-4 (MKGY). Residues 5-25 (VVAIFLSSIFLYYVLYCILWG) traverse the membrane as a helical; Signal-anchor for type II membrane protein segment. The Lumenal portion of the chain corresponds to 26–331 (TNGYWFPNEE…KKMVINLTQN (306 aa)). Residues Asn129, Asn181, Asn295, Asn308, and Asn327 are each glycosylated (N-linked (GlcNAc...) asparagine).

The protein belongs to the glycosyltransferase 29 family.

The protein resides in the golgi apparatus membrane. The catalysed reaction is a neolactoside nLc4Cer(d18:1(4E)) + CMP-N-acetyl-beta-neuraminate = a neolactoside IV(3)-alpha-NeuAc-nLc4Cer(d18:1(4E)) + CMP + H(+). The enzyme catalyses a beta-D-galactosyl-(1-&gt;4)-N-acetyl-beta-D-glucosaminyl derivative + CMP-N-acetyl-beta-neuraminate = an N-acetyl-alpha-neuraminyl-(2-&gt;3)-beta-D-galactosyl-(1-&gt;4)-N-acetyl-beta-D-glucosaminyl derivative + CMP + H(+). It carries out the reaction a neolactoside nLc6Cer(d18:1(4E)) + CMP-N-acetyl-beta-neuraminate = a neolactoside VI(3)-alpha-NeuNAc-nLc6Cer(d18:1(4E)) + CMP + H(+). Transfers the sialyl residue from CMP-N-acetyl-beta-neuraminate to the terminal galactose residue on sugar chains of glycoproteins and glycolipids. It's alpha-2,3-sialyltransferase activity is specific toward type II glycan chains (Galbeta1-4GlcNAc) on glycoproteins and glycolipids such as neolactosides nLc4Cer and nLc6Cer, whose sialyl-products serve as precursors for the Lewis X antigen. Critically involved in the synthesis of functional selectin ligands needed for neutrophil recruitment during inflammation and lymphocyte homing to the lymph nodes. The polypeptide is Type 2 lactosamine alpha-2,3-sialyltransferase (St3gal6) (Rattus norvegicus (Rat)).